The chain runs to 2705 residues: Teneurin-1 (2705 aa).

Disordered stretches follow at residues 1 to 73 (MEQM…STQD) and 135 to 222 (CLSS…TQDS). Positions 1 to 299 (MEQMDCKPYQ…KPYRCCNWKC (299 aa)) constitute a Teneurin N-terminal domain. The Cytoplasmic portion of the chain corresponds to 1–305 (MEQMDCKPYQ…NWKCTALSAT (305 aa)). Over residues 32 to 46 (DGRKQRQSYDSRETL) the composition is skewed to basic and acidic residues. The short motif at 62–65 (RKRK) is the Nuclear localization signal (NLS) element. Residues 135 to 147 (CLSSRANSALSLT) are compositionally biased toward polar residues. The span at 148-157 (DTDHERKSDG) shows a compositional bias: basic and acidic residues. Positions 173 to 182 (PLPPPPPPPH) are enriched in pro residues. Positions 271 to 278 (PPPRPLPR) match the Required for interaction with SORBS1 (Ten-1 ICD form) motif. A helical transmembrane segment spans residues 306–326 (AITVTLALLLAYVIAVHLFGL). Residues 327-2705 (TWQLQPVEGQ…FMRQSEIGRR (2379 aa)) are Extracellular-facing. A glycan (N-linked (GlcNAc...) asparagine) is linked at Asn414. EGF-like domains lie at 509–540 (VLDD…PDCA), 541–572 (KDSC…ECDV), 573–605 (PEEQ…EICE), 606–638 (EEDC…NCET), 639–672 (SLPI…SDCS), 673–702 (TELC…GPTC), 703–734 (EERT…DHCT), and 735–769 (IDGC…SGCN). Cystine bridges form between Cys513–Cys523, Cys517–Cys528, Cys530–Cys539, Cys548–Cys559, Cys561–Cys570, Cys577–Cys588, Cys582–Cys593, Cys595–Cys604, Cys609–Cys620, Cys614–Cys625, Cys627–Cys636, Cys647–Cys660, Cys662–Cys671, Cys676–Cys686, Cys680–Cys691, Cys693–Cys702, Cys707–Cys717, Cys711–Cys722, Cys724–Cys733, Cys738–Cys748, Cys742–Cys757, and Cys759–Cys768. Asn878 and Asn1057 each carry an N-linked (GlcNAc...) asparagine glycan. NHL repeat units lie at residues 1167 to 1192 (LFAP…VRRI), 1202 to 1246 (LELR…AKSL), 1272 to 1316 (SHCG…NGMI), 1331 to 1382 (LSCD…IAGR), and 1461 to 1504 (CFSG…VSRN). The YD 1 repeat unit spans residues 1514 to 1533 (YEIASPADQELYQFTINGTH). N-linked (GlcNAc...) asparagine glycosylation is found at Asn1530 and Asn1547. YD repeat units lie at residues 1550–1570 (YSGE…VHIR), 1588–1612 (YWLT…ALMT), 1613–1634 (YPGN…TVYE), and 1635–1655 (YDSD…SSFH). Residues Asn1643, Asn1679, Asn1737, Asn1761, and Asn1822 are each glycosylated (N-linked (GlcNAc...) asparagine). YD repeat units follow at residues 1825-1844 (YSHS…EKME), 1845-1865 (YDPS…WSYT), 1866-1884 (YLEK…YIFE), 1885-1905 (YDQS…HALQ), 1913-1929 (YRNI…FIQD), 1930-1949 (VTRD…RRVL), 1950-1969 (YKYS…TQVT), 1972-1992 (YEES…FICT), 1995-2015 (YRQT…EGLV), 2065-2085 (YDLN…FSAN), and 2093-2113 (YEIL…MGRM). A glycan (N-linked (GlcNAc...) asparagine) is linked at Asn2125. 5 YD repeats span residues 2133 to 2153 (YDRD…WRYS), 2154 to 2174 (YDLN…LTPL), 2176 to 2196 (YDLR…DEDG), 2208 to 2228 (YNSN…TVQY), and 2230 to 2250 (YDGL…LQFF). N-linked (GlcNAc...) asparagine glycosylation occurs at Asn2265. 2 YD repeats span residues 2276 to 2293 (YDLQ…GEEY) and 2294 to 2317 (YVAC…IKEI). The N-linked (GlcNAc...) asparagine glycan is linked to Asn2582.

The protein belongs to the tenascin family. Teneurin subfamily. Homodimer; disulfide-linked. Heterodimer with other teneurins. Ten-1 ICD interacts with SORBS1 (via third SH3 domain). Interacts with MBD1 isoform 2. In terms of processing, derives from the plasma membrane form by proteolytic processing. Further proteolytic cleavage may be generated. Post-translationally, derives from the plasma membrane form by proteolytic cleavage and translocates to the nucleus. In terms of tissue distribution, expressed in the neurons of the developing visual system and in fetal brain.

It localises to the cell membrane. It is found in the nucleus. Its subcellular location is the nucleus speckle. The protein localises to the nucleus matrix. The protein resides in the cytoplasm. It localises to the cytoskeleton. Its function is as follows. Involved in neural development, regulating the establishment of proper connectivity within the nervous system. May function as a cellular signal transducer. In terms of biological role, plays a role in the regulation of neuroplasticity in the limbic system. Mediates a rapid reorganization of actin- and tubulin-based cytoskeleton elements with an increase in dendritic arborization and spine density formation of neurons in the hippocampus and amygdala. Induces BDNF transcription inhibition in neurons. Activates the mitogen-activated protein (MAP) kinase 2 (MEK2) and extracellular signal-regulated kinase (ERK) cascade. Induces gene transcription activation. This is Teneurin-1 (TENM1) from Gallus gallus (Chicken).